Here is a 281-residue protein sequence, read N- to C-terminus: 2,3,4,5-tetrahydropyridine-2,6-dicarboxylate N-succinyltransferase (281 aa).

Substrate contacts are provided by Arg-108 and Asp-145.

This sequence belongs to the transferase hexapeptide repeat family. In terms of assembly, homotrimer.

The protein localises to the cytoplasm. The enzyme catalyses (S)-2,3,4,5-tetrahydrodipicolinate + succinyl-CoA + H2O = (S)-2-succinylamino-6-oxoheptanedioate + CoA. It participates in amino-acid biosynthesis; L-lysine biosynthesis via DAP pathway; LL-2,6-diaminopimelate from (S)-tetrahydrodipicolinate (succinylase route): step 1/3. The chain is 2,3,4,5-tetrahydropyridine-2,6-dicarboxylate N-succinyltransferase from Nitrobacter hamburgensis (strain DSM 10229 / NCIMB 13809 / X14).